The chain runs to 246 residues: Phycocyanobilin:ferredoxin oxidoreductase (246 aa).

The protein belongs to the HY2 family.

It carries out the reaction (2R,3Z)-phycocyanobilin + 4 oxidized [2Fe-2S]-[ferredoxin] = biliverdin IXalpha + 4 reduced [2Fe-2S]-[ferredoxin] + 4 H(+). Its function is as follows. Catalyzes the four-electron reduction of biliverdin IX-alpha (2-electron reduction at both the A and D rings); the reaction proceeds via an isolatable 2-electron intermediate, 181,182-dihydrobiliverdin. The protein is Phycocyanobilin:ferredoxin oxidoreductase of Crocosphaera subtropica (strain ATCC 51142 / BH68) (Cyanothece sp. (strain ATCC 51142)).